The following is a 211-amino-acid chain: Endonuclease YncB (211 aa).

The signal sequence occupies residues 1-19; that stretch reads MKKILISMIAIVLSITLAA. C20 carries N-palmitoyl cysteine lipidation. C20 is lipidated: S-diacylglycerol cysteine. Positions 24–63 are disordered; the sequence is HAAKNHSDSNGTEQVSQDTHSNEYNQTEQKAGTPHSKNQK. Positions 31-53 are enriched in polar residues; sequence DSNGTEQVSQDTHSNEYNQTEQK. The region spanning 64 to 197 is the TNase-like domain; the sequence is KLVNVTLDRA…KSDKLSIWSK (134 aa). Ca(2+) is bound at residue D77. R91 is a catalytic residue. 2 residues coordinate Ca(2+): D96 and T97. Catalysis depends on residues E99 and R142.

This sequence belongs to the thermonuclease family. The cofactor is Ca(2+).

Its subcellular location is the cell membrane. Its activity is regulated as follows. Inhibited by aurintricalboxylic acid but not by Zn(2+). Its function is as follows. Shows DNase activity on double strand DNA. The chain is Endonuclease YncB (yncB) from Bacillus subtilis (strain 168).